The primary structure comprises 203 residues: Ras-related protein Rab-18 (203 aa).

12 residues coordinate GTP: serine 20, glycine 23, lysine 24, serine 25, serine 26, aspartate 37, proline 38, threonine 43, glycine 69, lysine 126, aspartate 128, and alanine 155. Positions 40 to 48 (QAATIGVDF) match the Effector region motif. S-geranylgeranyl cysteine attachment occurs at residues cysteine 201 and cysteine 203. Cysteine 203 carries the post-translational modification Cysteine methyl ester.

The protein belongs to the small GTPase superfamily. Rab family.

The enzyme catalyses GTP + H2O = GDP + phosphate + H(+). In terms of biological role, the small GTPases Rab are key regulators of intracellular membrane trafficking, from the formation of transport vesicles to their fusion with membranes. Rabs cycle between an inactive GDP-bound form and an active GTP-bound form that is able to recruit to membranes different sets of downstream effectors directly responsible for vesicle formation, movement, tethering and fusion. Plays a role in apical endocytosis/recycling. May be implicated in transport between the plasma membrane and early endosomes. Plays a role in the shedding of pathogen spores from intestinal cells. The polypeptide is Ras-related protein Rab-18 (rab-18) (Caenorhabditis elegans).